The following is a 409-amino-acid chain: Snake venom metalloproteinase BITM02A (409 aa).

The signal sequence occupies residues 1-20 (MIEVLLVTICLAAFPYQGSS). The propeptide occupies 21–189 (IILESGNVND…KKASQSNLTP (169 aa)). The region spanning 193–389 (RYIELFIVVD…ENPQCILNKR (197 aa)) is the Peptidase M12B domain. 2 residues coordinate Ca(2+): glutamate 196 and aspartate 280. Disulfide bonds link cysteine 304/cysteine 384, cysteine 344/cysteine 368, and cysteine 346/cysteine 351. Residue histidine 329 participates in Zn(2+) binding. Glutamate 330 is an active-site residue. Histidine 333 and histidine 339 together coordinate Zn(2+). Residues cysteine 384, asparagine 387, valine 399, asparagine 402, leucine 404, glutamate 406, and glutamate 409 each contribute to the Ca(2+) site. A propeptide spanning residues 390-409 (LRTDTVSTPVSGNELLEAGE) is cleaved from the precursor.

Belongs to the venom metalloproteinase (M12B) family. P-I subfamily. Monomer. It depends on Zn(2+) as a cofactor. Expressed by the venom gland.

The protein localises to the secreted. Functionally, snake venom metalloproteinase that impairs hemostasis in the envenomed animal. This is Snake venom metalloproteinase BITM02A from Bothrops insularis (Golden lancehead).